Here is a 282-residue protein sequence, read N- to C-terminus: uncharacterized protein (282 aa).

One can recognise an N-acetyltransferase domain in the interval 5-140; that stretch reads DELIKLHEEH…SFQPYTKKLD (136 aa).

It belongs to the acetyltransferase family.

This is an uncharacterized protein from Bacillus subtilis (strain 168).